Consider the following 95-residue polypeptide: Aspartyl/glutamyl-tRNA(Asn/Gln) amidotransferase subunit C (95 aa).

This sequence belongs to the GatC family. As to quaternary structure, heterotrimer of A, B and C subunits.

The catalysed reaction is L-glutamyl-tRNA(Gln) + L-glutamine + ATP + H2O = L-glutaminyl-tRNA(Gln) + L-glutamate + ADP + phosphate + H(+). The enzyme catalyses L-aspartyl-tRNA(Asn) + L-glutamine + ATP + H2O = L-asparaginyl-tRNA(Asn) + L-glutamate + ADP + phosphate + 2 H(+). Its function is as follows. Allows the formation of correctly charged Asn-tRNA(Asn) or Gln-tRNA(Gln) through the transamidation of misacylated Asp-tRNA(Asn) or Glu-tRNA(Gln) in organisms which lack either or both of asparaginyl-tRNA or glutaminyl-tRNA synthetases. The reaction takes place in the presence of glutamine and ATP through an activated phospho-Asp-tRNA(Asn) or phospho-Glu-tRNA(Gln). The polypeptide is Aspartyl/glutamyl-tRNA(Asn/Gln) amidotransferase subunit C (Syntrophotalea carbinolica (strain DSM 2380 / NBRC 103641 / GraBd1) (Pelobacter carbinolicus)).